The primary structure comprises 166 residues: CDP-archaeol synthase (166 aa).

A run of 5 helical transmembrane segments spans residues 1–21, 55–75, 78–98, 110–130, and 131–151; these read MPII…LVAN, LLVA…FLGI, IYVS…GAFI, AIGL…IISK, and ISLN…LHIL.

The protein belongs to the CDP-archaeol synthase family. Requires Mg(2+) as cofactor.

Its subcellular location is the cell membrane. The catalysed reaction is 2,3-bis-O-(geranylgeranyl)-sn-glycerol 1-phosphate + CTP + H(+) = CDP-2,3-bis-O-(geranylgeranyl)-sn-glycerol + diphosphate. The protein operates within membrane lipid metabolism; glycerophospholipid metabolism. Its function is as follows. Catalyzes the formation of CDP-2,3-bis-(O-geranylgeranyl)-sn-glycerol (CDP-archaeol) from 2,3-bis-(O-geranylgeranyl)-sn-glycerol 1-phosphate (DGGGP) and CTP. This reaction is the third ether-bond-formation step in the biosynthesis of archaeal membrane lipids. The chain is CDP-archaeol synthase from Sulfurisphaera tokodaii (strain DSM 16993 / JCM 10545 / NBRC 100140 / 7) (Sulfolobus tokodaii).